A 140-amino-acid chain; its full sequence is ATP synthase epsilon chain (140 aa).

Belongs to the ATPase epsilon chain family. In terms of assembly, F-type ATPases have 2 components, CF(1) - the catalytic core - and CF(0) - the membrane proton channel. CF(1) has five subunits: alpha(3), beta(3), gamma(1), delta(1), epsilon(1). CF(0) has three main subunits: a, b and c.

The protein resides in the cell inner membrane. Its function is as follows. Produces ATP from ADP in the presence of a proton gradient across the membrane. The polypeptide is ATP synthase epsilon chain (Xanthomonas campestris pv. campestris (strain 8004)).